A 446-amino-acid polypeptide reads, in one-letter code: Gasdermin-A (446 aa).

The segment at 1–252 is triggers pyroptosis; sequence MTMFENVTRA…FILIQASDVG (252 aa). Residue 9 to 13 coordinates a cardiolipin; the sequence is RALAR. Beta stranded transmembrane passes span 78–95, 99–120, 164–180, and 184–198; these read NFSF…DVDV, VKVK…TLSV, VTLE…SLPF, and LGLQ…AVTI.

Belongs to the gasdermin family. In terms of assembly, homooligomer; homooligomeric ring-shaped pore complex containing 18-36 subunits when inserted in the membrane. Cleavage by bacterial SpeB relieves autoinhibition by releasing the N-terminal moiety (Gasdermin-A, N-terminal) that initiates pyroptosis. In terms of processing, palmitoylated. As to expression, expressed predominantly in the gastrointestinal (GI) tract and in the skin at a lower level. In the GI tract, the expression is highly restricted to the esophagus and forestomach.

The protein localises to the cytoplasm. It is found in the perinuclear region. Its subcellular location is the cytosol. The protein resides in the cell membrane. Its activity is regulated as follows. The full-length protein before cleavage is inactive: intramolecular interactions between N- and C-terminal domains mediate autoinhibition in the absence of activation signal. The intrinsic pyroptosis-inducing activity is carried by the released N-terminal moiety (Gasdermin-A, N-terminal) following cleavage by bacterial effector protein SpeB. Functionally, this form constitutes the precursor of the pore-forming protein and acts as a sensor of bacterial infection: upon infection, specifically cleaved by bacterial effector protein SpeB in epithelial cells, releasing the N-terminal moiety (Gasdermin-A, N-terminal) that binds to membranes and forms pores, triggering pyroptosis. Its function is as follows. Pore-forming protein that causes membrane permeabilization and pyroptosis. Released upon cleavage by bacterial effector protein SpeB, and binds to membrane inner leaflet lipids. Homooligomerizes within the membrane and forms pores of 10-15 nanometers (nm) of inner diameter, triggering pyroptosis. Pyroptosis triggers the elimination of the infected skin cell, depriving the pathogen of its protective niche, while inducing an inflammatory response. This ultimately prevents bacterial penetration of the epithelial barrier and a subsequent systemic dissemination of the pathogen. Binds to cardiolipin and other acidic phospholipids, such as phosphatidylserine, which mediate its targeting to the inner leaflet membrane. The protein is Gasdermin-A (Gsdma) of Mus musculus (Mouse).